The sequence spans 210 residues: ATP-dependent Clp protease proteolytic subunit (210 aa).

The Nucleophile role is filled by Ser-107. His-132 is an active-site residue.

Belongs to the peptidase S14 family. As to quaternary structure, fourteen ClpP subunits assemble into 2 heptameric rings which stack back to back to give a disk-like structure with a central cavity, resembling the structure of eukaryotic proteasomes.

It is found in the cytoplasm. The catalysed reaction is Hydrolysis of proteins to small peptides in the presence of ATP and magnesium. alpha-casein is the usual test substrate. In the absence of ATP, only oligopeptides shorter than five residues are hydrolyzed (such as succinyl-Leu-Tyr-|-NHMec, and Leu-Tyr-Leu-|-Tyr-Trp, in which cleavage of the -Tyr-|-Leu- and -Tyr-|-Trp bonds also occurs).. In terms of biological role, cleaves peptides in various proteins in a process that requires ATP hydrolysis. Has a chymotrypsin-like activity. Plays a major role in the degradation of misfolded proteins. This Ruegeria sp. (strain TM1040) (Silicibacter sp.) protein is ATP-dependent Clp protease proteolytic subunit.